We begin with the raw amino-acid sequence, 316 residues long: Cell division protein ZipA (316 aa).

Over 1 to 5 the chain is Periplasmic; the sequence is MQELR. A helical membrane pass occupies residues 6–26; it reads FVLIVVGALAIAALLFHGLWS. Residues 27–316 lie on the Cytoplasmic side of the membrane; it reads SKKEGKAKFG…QIVEFNAANA (290 aa). The interval 36–65 is disordered; the sequence is GNKPLGKLDVDQGDKDSVEQERSFAPATED. A compositionally biased stretch (basic and acidic residues) spans 41–57; sequence GKLDVDQGDKDSVEQER.

The protein belongs to the ZipA family. As to quaternary structure, interacts with FtsZ via their C-terminal domains.

It localises to the cell inner membrane. In terms of biological role, essential cell division protein that stabilizes the FtsZ protofilaments by cross-linking them and that serves as a cytoplasmic membrane anchor for the Z ring. Also required for the recruitment to the septal ring of downstream cell division proteins. The polypeptide is Cell division protein ZipA (Vibrio parahaemolyticus serotype O3:K6 (strain RIMD 2210633)).